We begin with the raw amino-acid sequence, 127 residues long: Large ribosomal subunit protein bL20 (127 aa).

The protein belongs to the bacterial ribosomal protein bL20 family.

Functionally, binds directly to 23S ribosomal RNA and is necessary for the in vitro assembly process of the 50S ribosomal subunit. It is not involved in the protein synthesizing functions of that subunit. The sequence is that of Large ribosomal subunit protein bL20 from Corynebacterium jeikeium (strain K411).